Reading from the N-terminus, the 525-residue chain is GMP synthase [glutamine-hydrolyzing] (525 aa).

The 199-residue stretch at 9–207 folds into the Glutamine amidotransferase type-1 domain; it reads RILILDFGSQ…VQDICGCEAL (199 aa). Cysteine 86 functions as the Nucleophile in the catalytic mechanism. Active-site residues include histidine 181 and glutamate 183. Residues 208–400 enclose the GMPS ATP-PPase domain; the sequence is WTASNIVEDA…LGLPYDMVYR (193 aa). 235–241 lines the ATP pocket; sequence SGGVDSS.

In terms of assembly, homodimer.

It carries out the reaction XMP + L-glutamine + ATP + H2O = GMP + L-glutamate + AMP + diphosphate + 2 H(+). Its pathway is purine metabolism; GMP biosynthesis; GMP from XMP (L-Gln route): step 1/1. In terms of biological role, catalyzes the synthesis of GMP from XMP. The chain is GMP synthase [glutamine-hydrolyzing] from Pseudomonas entomophila (strain L48).